The chain runs to 319 residues: ATP-dependent 6-phosphofructokinase (319 aa).

G11 contacts ATP. R21–R25 contributes to the ADP binding site. Residues R72–C73 and G102–S105 contribute to the ATP site. D103 provides a ligand contact to Mg(2+). Residue T125–D127 coordinates substrate. D127 (proton acceptor) is an active-site residue. Position 154 (R154) interacts with ADP. Residues R162 and M169–R171 contribute to the substrate site. Residues G185–E187, R211, and K213–H215 each bind ADP. Residues E222, R243, and H249 to R252 each bind substrate.

This sequence belongs to the phosphofructokinase type A (PFKA) family. ATP-dependent PFK group I subfamily. Prokaryotic clade 'B1' sub-subfamily. Homotetramer. Mg(2+) is required as a cofactor.

The protein localises to the cytoplasm. The catalysed reaction is beta-D-fructose 6-phosphate + ATP = beta-D-fructose 1,6-bisphosphate + ADP + H(+). Its pathway is carbohydrate degradation; glycolysis; D-glyceraldehyde 3-phosphate and glycerone phosphate from D-glucose: step 3/4. Its activity is regulated as follows. Allosterically activated by ADP and other diphosphonucleosides, and allosterically inhibited by phosphoenolpyruvate. Catalyzes the phosphorylation of D-fructose 6-phosphate to fructose 1,6-bisphosphate by ATP, the first committing step of glycolysis. In Bacillus anthracis (strain A0248), this protein is ATP-dependent 6-phosphofructokinase.